The primary structure comprises 256 residues: Glucanase inhibitor protein 2 (256 aa).

The first 15 residues, 1 to 15, serve as a signal peptide directing secretion; it reads MKLISTIAAATTAFG. A Peptidase S1 domain is found at 27-254; sequence IFGGGIIPSG…ATEWINSVTK (228 aa). Cysteines 54 and 70 form a disulfide. N-linked (GlcNAc...) asparagine glycosylation is found at Asn-87, Asn-102, Asn-107, and Asn-157. 2 disulfide bridges follow: Cys-177–Cys-189 and Cys-199–Cys-230.

This sequence belongs to the peptidase S1 family. Forms an apoplastic complex with host endoglucanases in tomato leaves during P.infestans infection.

Its subcellular location is the secreted. Its function is as follows. Secreted effector that suppresses host plant glucan elicitor-mediated defense responses. Targets host endoglucanases and inhibits the endoglucanase-mediated release of elicitor-active glucan oligosaccharides from P.infestans cell walls. This chain is Glucanase inhibitor protein 2, found in Phytophthora infestans (Potato late blight agent).